Reading from the N-terminus, the 200-residue chain is Protein GrpE (200 aa).

A compositionally biased stretch (basic and acidic residues) spans 1–11; the sequence is MTDNDGQKDFS. Residues 1-43 form a disordered region; that stretch reads MTDNDGQKDFSEAAAENAGSKPGEPRVSKPYIMPDDPEETPSE.

It belongs to the GrpE family. As to quaternary structure, homodimer.

It localises to the cytoplasm. Its function is as follows. Participates actively in the response to hyperosmotic and heat shock by preventing the aggregation of stress-denatured proteins, in association with DnaK and GrpE. It is the nucleotide exchange factor for DnaK and may function as a thermosensor. Unfolded proteins bind initially to DnaJ; upon interaction with the DnaJ-bound protein, DnaK hydrolyzes its bound ATP, resulting in the formation of a stable complex. GrpE releases ADP from DnaK; ATP binding to DnaK triggers the release of the substrate protein, thus completing the reaction cycle. Several rounds of ATP-dependent interactions between DnaJ, DnaK and GrpE are required for fully efficient folding. In Afipia carboxidovorans (strain ATCC 49405 / DSM 1227 / KCTC 32145 / OM5) (Oligotropha carboxidovorans), this protein is Protein GrpE.